The chain runs to 346 residues: Holliday junction branch migration complex subunit RuvB (346 aa).

Positions 1–181 (MSDRNPLIDA…FGIPTRLNFY (181 aa)) are large ATPase domain (RuvB-L). ATP-binding positions include Leu20, Arg21, Gly62, Lys65, Thr66, Thr67, 128–130 (EDF), Arg171, Tyr181, and Arg218. Residue Thr66 coordinates Mg(2+). The small ATPAse domain (RuvB-S) stretch occupies residues 182 to 252 (TVEELEYIVR…IADEALSRLE (71 aa)). The head domain (RuvB-H) stretch occupies residues 255 to 346 (NRGLDQLDRR…SQYGLFMEDE (92 aa)). DNA is bound by residues Arg291, Arg310, and Arg315.

The protein belongs to the RuvB family. Homohexamer. Forms an RuvA(8)-RuvB(12)-Holliday junction (HJ) complex. HJ DNA is sandwiched between 2 RuvA tetramers; dsDNA enters through RuvA and exits via RuvB. An RuvB hexamer assembles on each DNA strand where it exits the tetramer. Each RuvB hexamer is contacted by two RuvA subunits (via domain III) on 2 adjacent RuvB subunits; this complex drives branch migration. In the full resolvosome a probable DNA-RuvA(4)-RuvB(12)-RuvC(2) complex forms which resolves the HJ.

The protein localises to the cytoplasm. It carries out the reaction ATP + H2O = ADP + phosphate + H(+). In terms of biological role, the RuvA-RuvB-RuvC complex processes Holliday junction (HJ) DNA during genetic recombination and DNA repair, while the RuvA-RuvB complex plays an important role in the rescue of blocked DNA replication forks via replication fork reversal (RFR). RuvA specifically binds to HJ cruciform DNA, conferring on it an open structure. The RuvB hexamer acts as an ATP-dependent pump, pulling dsDNA into and through the RuvAB complex. RuvB forms 2 homohexamers on either side of HJ DNA bound by 1 or 2 RuvA tetramers; 4 subunits per hexamer contact DNA at a time. Coordinated motions by a converter formed by DNA-disengaged RuvB subunits stimulates ATP hydrolysis and nucleotide exchange. Immobilization of the converter enables RuvB to convert the ATP-contained energy into a lever motion, pulling 2 nucleotides of DNA out of the RuvA tetramer per ATP hydrolyzed, thus driving DNA branch migration. The RuvB motors rotate together with the DNA substrate, which together with the progressing nucleotide cycle form the mechanistic basis for DNA recombination by continuous HJ branch migration. Branch migration allows RuvC to scan DNA until it finds its consensus sequence, where it cleaves and resolves cruciform DNA. The sequence is that of Holliday junction branch migration complex subunit RuvB from Brucella anthropi (strain ATCC 49188 / DSM 6882 / CCUG 24695 / JCM 21032 / LMG 3331 / NBRC 15819 / NCTC 12168 / Alc 37) (Ochrobactrum anthropi).